The following is a 180-amino-acid chain: MIIFRRCVFINHRDFQVNEQIRDKEVRLIDQDGKQIGIMSAKEAYKIAQERHLDLVKIVPNANPPVCKLMDFGKYRYELSKREKEAKKKQKIINVKEIRMSPNIEDHDFGVKLKSAIKFLKDGDKVKVTIRFRGREAAHTSLAEDLLKRFAEELREYGNVEKAPSMDGRNMMMVIAPKKQ.

It belongs to the IF-3 family. Monomer.

The protein localises to the cytoplasm. In terms of biological role, IF-3 binds to the 30S ribosomal subunit and shifts the equilibrium between 70S ribosomes and their 50S and 30S subunits in favor of the free subunits, thus enhancing the availability of 30S subunits on which protein synthesis initiation begins. This chain is Translation initiation factor IF-3, found in Caldanaerobacter subterraneus subsp. tengcongensis (strain DSM 15242 / JCM 11007 / NBRC 100824 / MB4) (Thermoanaerobacter tengcongensis).